We begin with the raw amino-acid sequence, 333 residues long: tRNA uridine(34) hydroxylase (333 aa).

The 95-residue stretch at 123–217 folds into the Rhodanese domain; it reads SDPEVVLVDT…YLEEVNKAES (95 aa). Cys-177 (cysteine persulfide intermediate) is an active-site residue. Basic and acidic residues predominate over residues 313–327; that stretch reads QKKEALRKQSAEKNK. Positions 313 to 333 are disordered; it reads QKKEALRKQSAEKNKAKQANA.

This sequence belongs to the TrhO family.

The catalysed reaction is uridine(34) in tRNA + AH2 + O2 = 5-hydroxyuridine(34) in tRNA + A + H2O. Catalyzes oxygen-dependent 5-hydroxyuridine (ho5U) modification at position 34 in tRNAs. In Shewanella oneidensis (strain ATCC 700550 / JCM 31522 / CIP 106686 / LMG 19005 / NCIMB 14063 / MR-1), this protein is tRNA uridine(34) hydroxylase.